We begin with the raw amino-acid sequence, 486 residues long: Cardiolipin synthase A (486 aa).

2 consecutive transmembrane segments (helical) span residues 3-23 (TFYT…IAGV) and 38-58 (MAWL…YLSF). 2 PLD phosphodiesterase domains span residues 219–246 (MDLR…VDPR) and 399–426 (EGGL…DMRS). Active-site residues include H224, K226, D231, H404, K406, and D411.

The protein belongs to the phospholipase D family. Cardiolipin synthase subfamily. ClsA sub-subfamily.

Its subcellular location is the cell inner membrane. The catalysed reaction is 2 a 1,2-diacyl-sn-glycero-3-phospho-(1'-sn-glycerol) = a cardiolipin + glycerol. Catalyzes the reversible phosphatidyl group transfer from one phosphatidylglycerol molecule to another to form cardiolipin (CL) (diphosphatidylglycerol) and glycerol. This chain is Cardiolipin synthase A, found in Yersinia pseudotuberculosis serotype IB (strain PB1/+).